A 325-amino-acid chain; its full sequence is 5-dehydro-2-deoxygluconokinase (325 aa).

It belongs to the carbohydrate kinase PfkB family.

It carries out the reaction 5-dehydro-2-deoxy-D-gluconate + ATP = 6-phospho-5-dehydro-2-deoxy-D-gluconate + ADP + H(+). It participates in polyol metabolism; myo-inositol degradation into acetyl-CoA; acetyl-CoA from myo-inositol: step 5/7. Catalyzes the phosphorylation of 5-dehydro-2-deoxy-D-gluconate (2-deoxy-5-keto-D-gluconate or DKG) to 6-phospho-5-dehydro-2-deoxy-D-gluconate (DKGP). In Listeria innocua serovar 6a (strain ATCC BAA-680 / CLIP 11262), this protein is 5-dehydro-2-deoxygluconokinase.